The primary structure comprises 537 residues: Immunoglobulin-like domain-containing receptor 1 (537 aa).

The first 22 residues, 1-22, serve as a signal peptide directing secretion; that stretch reads MGCGLLAAGLLLFTWLPAGCLS. The 139-residue stretch at 23–161 folds into the Ig-like V-type domain; the sequence is LLVTVQHTER…TSGDPDKEVK (139 aa). Over 23-166 the chain is Extracellular; that stretch reads LLVTVQHTER…DKEVKLIVLH (144 aa). Cys44 and Cys144 are disulfide-bonded. A helical transmembrane segment spans residues 167 to 187; it reads WLTVIFIILGALLLLLLIGVC. Topologically, residues 188-537 are cytoplasmic; sequence WCQCCPQYCC…SSHSGRSVVI (350 aa). Residues 333-537 are disordered; that stretch reads PPLIRDPPSS…SSHSGRSVVI (205 aa). Over residues 341-357 the composition is skewed to polar residues; sequence SSRTSNPSHQQRLNAVS. 2 stretches are compositionally biased toward basic and acidic residues: residues 359 to 380 and 434 to 444; these read RHCDLSERPRQRHHSDFLRELQ and RRPEPREGAQR. The segment covering 480 to 490 has biased composition (basic residues); it reads QRRHHHRRRRS. A phosphoserine mark is found at Ser490 and Ser492. A compositionally biased stretch (basic and acidic residues) spans 518–530; it reads GNVERRLERESSH.

It belongs to the immunoglobulin superfamily. LISCH7 family. As to quaternary structure, homooligomer. Interacts with MARVELD2 and OCLN; the interaction is required to recruit MARVELD2 to tricellular contacts. Interacts (via C-terminus) with TRA2A, TRA2B and SRSF1. Interacts with PLSCR1. Expressed in the vestibule and in hair cells and supporting cells of the cochlea. Expressed in epithelial tissues. Highly expressed in colon but also detected in small intestine, bladder and lung. In colon, expressed in the upper portion of the crypts (at protein level). Expressed in CCK secretory cells of the proximal small intestine (at protein level). Expressed in the organ of Corti, stria vascularis, utricle and saccule of the inner ear.

It is found in the cell membrane. It localises to the cell junction. The protein resides in the tight junction. The protein localises to the nucleus. Its subcellular location is the cytoplasm. Its function is as follows. Maintains epithelial barrier function by recruiting MARVELD2/tricellulin to tricellular tight junctions (tTJs). Crucial for normal hearing by maintaining the structural and functional integrity of tTJs, which are critical for the survival of auditory neurosensory HCs. Mediates fatty acids and lipoproteins-stimulated CCK/cholecystokinin secretion in the small intestine. In the inner ear, may regulate alternative pre-mRNA splicing via binding to TRA2A, TRA2B and SRSF1. In Mus musculus (Mouse), this protein is Immunoglobulin-like domain-containing receptor 1.